Here is a 276-residue protein sequence, read N- to C-terminus: Large ribosomal subunit protein uL2 (276 aa).

Disordered stretches follow at residues 1-58 (MAIR…GGGH) and 218-276 (RPIT…KNRK). Residues 16–27 (ASVSDFSDLTRS) show a composition bias toward polar residues. Residues 255-276 (RRPKKASNKMIVRRRPNGKNRK) are compositionally biased toward basic residues.

It belongs to the universal ribosomal protein uL2 family. In terms of assembly, part of the 50S ribosomal subunit. Forms a bridge to the 30S subunit in the 70S ribosome.

In terms of biological role, one of the primary rRNA binding proteins. Required for association of the 30S and 50S subunits to form the 70S ribosome, for tRNA binding and peptide bond formation. It has been suggested to have peptidyltransferase activity; this is somewhat controversial. Makes several contacts with the 16S rRNA in the 70S ribosome. The polypeptide is Large ribosomal subunit protein uL2 (Bifidobacterium animalis subsp. lactis (strain AD011)).